Consider the following 345-residue polypeptide: MAYSAELDIRVTDTSLRDGSHHKRHQFTATEVRDIVAALDGAGVPVIEVTHGDGLGGSSFNYGFSKTPEQELVTIAAQTAKQAKIAVLMLPGVGVKEDIKVSQDNGASICRIATHCTEADVSIQHFGLARELGLETVGFLMMSHTQPPEVLAKQARIMADAGCQCVYIVDSAGALVLEQVSDRVAAVVAELGDDAQVGFHGHENLDLAVANSIYAIRAGATQIDGSARRFGAGAGNTPVEALVGVCDKLGIRTGIDFFAIADAAEDVVRPAMPQECLLDRQALMMGYAGVYSSFLKHAERQAERYGVSAAEMLVRAGRRKLVGGQEDQLIDIALELQREQQTATV.

A Pyruvate carboxyltransferase domain is found at 9–261 (IRVTDTSLRD…RTGIDFFAIA (253 aa)). 17 to 18 (RD) contacts substrate. D18 contacts Mn(2+). The Proton acceptor role is filled by H21. Substrate-binding residues include S171 and H200. Mn(2+)-binding residues include H200 and H202. Position 291 (Y291) interacts with substrate.

The protein belongs to the 4-hydroxy-2-oxovalerate aldolase family.

It carries out the reaction (S)-4-hydroxy-2-oxopentanoate = acetaldehyde + pyruvate. The polypeptide is 4-hydroxy-2-oxovalerate aldolase 1 (Nocardia farcinica (strain IFM 10152)).